The chain runs to 362 residues: O-methyltransferase 13 (362 aa).

S181, G205, D228, D248, and K262 together coordinate S-adenosyl-L-homocysteine. D228 is a binding site for S-adenosyl-L-methionine. H266 serves as the catalytic Proton acceptor.

This sequence belongs to the class I-like SAM-binding methyltransferase superfamily. Cation-independent O-methyltransferase family. In terms of assembly, homodimer. In terms of tissue distribution, mainly expressed in vascular and cortical tissues.

The catalysed reaction is dopamine + S-adenosyl-L-methionine = 3-methoxytyramine + S-adenosyl-L-homocysteine + H(+). It participates in aromatic compound metabolism. It functions in the pathway alkaloid biosynthesis. O-methyltransferase participating in the biosynthesis of natural products derived from phenylethylamine, including mescaline, a natural hallucinogen potentially used in psychotherapeutic treatments. Catalyzes the O-methylation of dopamine and 4,5-dihydroxy-3-methoxyphenethylamine. The chain is O-methyltransferase 13 from Lophophora williamsii (Peyote).